A 247-amino-acid chain; its full sequence is MNGADLRIGIAGITGRMGKLLAEAVPLAGATLAGGIGRDGDLAALARESDVVIDFTVAATVSRHAGILAAAGTPWVLGTTGFDPAAEADIADAAARIPVFQAANFAPGVNLVIALAERLGATLAAETHDAEILEMHHRQKIDAPSGTALAIGAAVARGRGVDLAAVKDSGRDGHTGKRETGAIGFAALRGGQIVGSHSAIFTSAVEQITLTHHALDRRIFAEGAVRAALWLAGRAPGRYGMRDLLGL.

NAD(+) is bound by residues G12–M17, G78–T80, and A102–F105. The Proton donor/acceptor role is filled by H136. H137 lines the (S)-2,3,4,5-tetrahydrodipicolinate pocket. K140 serves as the catalytic Proton donor. G146–T147 lines the (S)-2,3,4,5-tetrahydrodipicolinate pocket.

It belongs to the DapB family.

The protein localises to the cytoplasm. The enzyme catalyses (S)-2,3,4,5-tetrahydrodipicolinate + NAD(+) + H2O = (2S,4S)-4-hydroxy-2,3,4,5-tetrahydrodipicolinate + NADH + H(+). It carries out the reaction (S)-2,3,4,5-tetrahydrodipicolinate + NADP(+) + H2O = (2S,4S)-4-hydroxy-2,3,4,5-tetrahydrodipicolinate + NADPH + H(+). The protein operates within amino-acid biosynthesis; L-lysine biosynthesis via DAP pathway; (S)-tetrahydrodipicolinate from L-aspartate: step 4/4. Catalyzes the conversion of 4-hydroxy-tetrahydrodipicolinate (HTPA) to tetrahydrodipicolinate. The chain is 4-hydroxy-tetrahydrodipicolinate reductase from Acidiphilium cryptum (strain JF-5).